Reading from the N-terminus, the 259-residue chain is MSTAIIVVGANGRMGKTISHLAATESAFSLAGLVDSREHVESLAGASCPVGDSLAAVLPKAPGAVAIDFTAPSVSLQSARAVAASGHALVIGTTGFTDAEKDELHELAKKAPIFWASNMSIGVNVLCKILPELTRALGDAYDIEMVELHHNRKKDSPSGTALTLGECLAEARGWQLNDVRCSARDGIIGERPKAQIGIQAIRGGDVVGVHTVYFMGPGERIEVTHQAHSRDTFAQGALRAAAWLVGQKPGKLYGMRDMF.

Position 9–14 (9–14 (GANGRM)) interacts with NAD(+). Position 37 (arginine 37) interacts with NADP(+). Residues 92–94 (GTT) and 116–119 (ASNM) each bind NAD(+). Histidine 149 serves as the catalytic Proton donor/acceptor. Residue histidine 150 coordinates (S)-2,3,4,5-tetrahydrodipicolinate. Lysine 153 serves as the catalytic Proton donor. 159-160 (GT) is a binding site for (S)-2,3,4,5-tetrahydrodipicolinate.

Belongs to the DapB family.

Its subcellular location is the cytoplasm. The catalysed reaction is (S)-2,3,4,5-tetrahydrodipicolinate + NAD(+) + H2O = (2S,4S)-4-hydroxy-2,3,4,5-tetrahydrodipicolinate + NADH + H(+). It catalyses the reaction (S)-2,3,4,5-tetrahydrodipicolinate + NADP(+) + H2O = (2S,4S)-4-hydroxy-2,3,4,5-tetrahydrodipicolinate + NADPH + H(+). It functions in the pathway amino-acid biosynthesis; L-lysine biosynthesis via DAP pathway; (S)-tetrahydrodipicolinate from L-aspartate: step 4/4. Functionally, catalyzes the conversion of 4-hydroxy-tetrahydrodipicolinate (HTPA) to tetrahydrodipicolinate. This Desulfovibrio desulfuricans (strain ATCC 27774 / DSM 6949 / MB) protein is 4-hydroxy-tetrahydrodipicolinate reductase.